Consider the following 341-residue polypeptide: 2-keto-4-carboxy-3-hexenedioate hydratase (341 aa).

2 residues coordinate Zn(2+): histidine 8 and histidine 10. 71–73 lines the substrate pocket; that stretch reads RAS. Histidine 178 serves as a coordination point for Zn(2+). Positions 194 and 223 each coordinate substrate. Residue glutamate 284 is the Proton donor/acceptor of the active site. Position 290 (arginine 290) interacts with substrate.

This sequence belongs to the metallo-dependent hydrolases superfamily. In terms of assembly, homodimer. Requires Zn(2+) as cofactor.

The catalysed reaction is (3Z)-2-oxo-4-carboxy-3-hexenedioate + H2O = (2S)-2-hydroxy-4-oxobutane-1,2,4-tricarboxylate. It functions in the pathway secondary metabolite metabolism; lignin degradation. Contributes to the degradation of lignin at the level of the protocatechuate 4,5-cleavage pathway. Catalyzes the hydration of the double bond of (3Z)-2-keto-4-carboxy-3-hexenedioate (KCH) to (4S)-4-carboxy-4-hydroxy-2-oxoadipate (CHA, also named (2S)-2-hydroxy-4-oxobutane-1,2,4-tricarboxylate). Is involved in the catabolism of both vanillate and syringate. This chain is 2-keto-4-carboxy-3-hexenedioate hydratase, found in Sphingobium sp. (strain NBRC 103272 / SYK-6).